We begin with the raw amino-acid sequence, 601 residues long: Probable HECT-type ubiquitin ligase-interacting protein creD (601 aa).

Disordered regions lie at residues 374–397 (EVDP…GTLS) and 455–489 (SADY…DHDH). The segment covering 461 to 473 (PSSGSNSHSPASP) has biased composition (low complexity). The span at 475–489 (LSRRPSDEGYHDHDH) shows a compositional bias: basic and acidic residues.

The protein belongs to the arrestin family. As to quaternary structure, interacts with hulA.

Functionally, component of the regulatory network controlling carbon source utilization through ubiquitination and deubiquitination involving creA, creB, creC, creD and acrB. May be involved in signaling by recognizing appropriately phosphorylated substrates via its arrestin domains and then recruit a HECT-type ubiquitin ligase such as hulA, leading to ubiquitination of the substrate, providing a link between ubiquitination and phosphorylation in protein regulation and stability. The chain is Probable HECT-type ubiquitin ligase-interacting protein creD (creD) from Neosartorya fischeri (strain ATCC 1020 / DSM 3700 / CBS 544.65 / FGSC A1164 / JCM 1740 / NRRL 181 / WB 181) (Aspergillus fischerianus).